The sequence spans 134 residues: UPF0412 protein YaaI (134 aa).

Residues 1 to 23 form the signal peptide; sequence MKSVFTISASLAISLMLCCTAQA.

The protein belongs to the UPF0412 family.

The chain is UPF0412 protein YaaI from Escherichia coli (strain K12).